The following is a 214-amino-acid chain: Putative ankyrin repeat protein RF_1081 (214 aa).

The segment covering 1–14 (MRKQQIPTLSTSAL) has biased composition (polar residues). The interval 1-32 (MRKQQIPTLSTSALDKSPGPGSPDSDIEMKST) is disordered. An ANK repeat occupies 67-135 (NPNALLHEAA…EEPILVTKKD (69 aa)).

This chain is Putative ankyrin repeat protein RF_1081, found in Rickettsia felis (strain ATCC VR-1525 / URRWXCal2) (Rickettsia azadi).